A 445-amino-acid chain; its full sequence is Homogentisate 1,2-dioxygenase (445 aa).

At K98 the chain carries N6-acetyllysine. Fe cation is bound by residues H335, E341, and H371. N6-succinyllysine is present on K414.

The protein belongs to the homogentisate dioxygenase family. Homohexamer arranged as a dimer of trimers. It depends on Fe cation as a cofactor.

The enzyme catalyses homogentisate + O2 = 4-maleylacetoacetate + H(+). The protein operates within amino-acid degradation; L-phenylalanine degradation; acetoacetate and fumarate from L-phenylalanine: step 4/6. Its function is as follows. Catalyzes the conversion of homogentisate to maleylacetoacetate. The chain is Homogentisate 1,2-dioxygenase (Hgd) from Mus musculus (Mouse).